The following is a 214-amino-acid chain: A-type ATP synthase subunit D (214 aa).

Belongs to the V-ATPase D subunit family. In terms of assembly, has multiple subunits with at least A(3), B(3), C, D, E, F, H, I and proteolipid K(x).

It localises to the cell membrane. In terms of biological role, component of the A-type ATP synthase that produces ATP from ADP in the presence of a proton gradient across the membrane. The polypeptide is A-type ATP synthase subunit D (Thermococcus gammatolerans (strain DSM 15229 / JCM 11827 / EJ3)).